A 156-amino-acid chain; its full sequence is Endoribonuclease YbeY (156 aa).

Residues histidine 122, histidine 126, and histidine 132 each contribute to the Zn(2+) site.

This sequence belongs to the endoribonuclease YbeY family. The cofactor is Zn(2+).

It is found in the cytoplasm. Single strand-specific metallo-endoribonuclease involved in late-stage 70S ribosome quality control and in maturation of the 3' terminus of the 16S rRNA. The protein is Endoribonuclease YbeY of Moorella thermoacetica (strain ATCC 39073 / JCM 9320).